The sequence spans 304 residues: Deoxyribonuclease-1-like 1 (304 aa).

Residues 1 to 24 (MPYMAMHGLTVALLLIFLAGGTEA) form the signal peptide. Asn-92 carries N-linked (GlcNAc...) asparagine glycosylation. Residue Glu-103 is part of the active site. Residue Asn-123 is glycosylated (N-linked (GlcNAc...) asparagine). Residue His-154 is part of the active site. A disulfide bridge connects residues Cys-193 and Cys-230. N-linked (GlcNAc...) asparagine glycosylation is present at Asn-229.

This sequence belongs to the DNase I family.

It localises to the endoplasmic reticulum. The polypeptide is Deoxyribonuclease-1-like 1 (DNASE1L1) (Cricetulus griseus (Chinese hamster)).